Here is a 534-residue protein sequence, read N- to C-terminus: Prolyl 4-hydroxylase subunit alpha-2 (534 aa).

The signal sequence occupies residues 1-21 (MKPWLCLVFFTSAFLIWHAEA). The N-linked (GlcNAc...) asparagine glycan is linked to Asn-115. A TPR repeat occupies 207–240 (VEILDYLSYAVFQFGDLHRAMELTRRLISLDSTH). An N-linked (GlcNAc...) asparagine glycan is attached at Asn-263. The 107-residue stretch at 413-519 (TAELLQVANY…KWVSNKWFHE (107 aa)) folds into the Fe2OG dioxygenase domain. The Fe cation site is built by His-431, Asp-433, and His-500. Lys-510 contacts 2-oxoglutarate.

Belongs to the P4HA family. In terms of assembly, heterotetramer of two alpha-2 chains and two beta chains (the beta chain is the multi-functional PDI). The cofactor is Fe(2+). It depends on L-ascorbate as a cofactor.

It localises to the endoplasmic reticulum lumen. The enzyme catalyses L-prolyl-[collagen] + 2-oxoglutarate + O2 = trans-4-hydroxy-L-prolyl-[collagen] + succinate + CO2. Its function is as follows. Catalyzes the post-translational formation of 4-hydroxyproline in -Xaa-Pro-Gly- sequences in collagens and other proteins. This is Prolyl 4-hydroxylase subunit alpha-2 (P4HA2) from Gallus gallus (Chicken).